The primary structure comprises 466 residues: 3-isopropylmalate dehydratase large subunit (466 aa).

Residues Cys-347, Cys-407, and Cys-410 each coordinate [4Fe-4S] cluster.

It belongs to the aconitase/IPM isomerase family. LeuC type 1 subfamily. In terms of assembly, heterodimer of LeuC and LeuD. The cofactor is [4Fe-4S] cluster.

It catalyses the reaction (2R,3S)-3-isopropylmalate = (2S)-2-isopropylmalate. It functions in the pathway amino-acid biosynthesis; L-leucine biosynthesis; L-leucine from 3-methyl-2-oxobutanoate: step 2/4. In terms of biological role, catalyzes the isomerization between 2-isopropylmalate and 3-isopropylmalate, via the formation of 2-isopropylmaleate. This Enterobacter sp. (strain 638) protein is 3-isopropylmalate dehydratase large subunit.